The following is a 237-amino-acid chain: Methylosome subunit pICln (237 aa).

N-acetylserine is present on Ser-2. Residues Ser-102, Ser-144, Ser-193, Ser-195, Ser-198, and Ser-210 each carry the phosphoserine modification. The segment at 135-159 is disordered; it reads LHPDPEDEDSDDYDGEEYDVEAHEQ. A compositionally biased stretch (acidic residues) spans 139–153; that stretch reads PEDEDSDDYDGEEYD. Thr-223 is modified (phosphothreonine).

This sequence belongs to the pICln (TC 1.A.47) family. In terms of assembly, component of the methylosome, a 20S complex containing at least PRMT5/SKB1, WDR77/MEP50 and CLNS1A/pICln. May mediate SNRPD1 and SNRPD3 methylation. Forms a 6S pICln-Sm complex composed of CLNS1A/pICln, SNRPD1, SNRPD2, SNRPE, SNRPF and SNRPG; ring-like structure where CLNS1A/pICln mimics additional Sm proteins and which is unable to assemble into the core snRNP. Interacts with LSM10 and LSM11.

It is found in the cytoplasm. The protein resides in the cytosol. Its subcellular location is the nucleus. The protein localises to the cytoskeleton. Its function is as follows. Involved in both the assembly of spliceosomal snRNPs and the methylation of Sm proteins. Chaperone that regulates the assembly of spliceosomal U1, U2, U4 and U5 small nuclear ribonucleoproteins (snRNPs), the building blocks of the spliceosome, and thereby plays an important role in the splicing of cellular pre-mRNAs. Most spliceosomal snRNPs contain a common set of Sm proteins SNRPB, SNRPD1, SNRPD2, SNRPD3, SNRPE, SNRPF and SNRPG that assemble in a heptameric protein ring on the Sm site of the small nuclear RNA to form the core snRNP (Sm core). In the cytosol, the Sm proteins SNRPD1, SNRPD2, SNRPE, SNRPF and SNRPG are trapped in an inactive 6S pICln-Sm complex by the chaperone CLNS1A that controls the assembly of the core snRNP. Dissociation by the SMN complex of CLNS1A from the trapped Sm proteins and their transfer to an SMN-Sm complex triggers the assembly of core snRNPs and their transport to the nucleus. This chain is Methylosome subunit pICln (CLNS1A), found in Homo sapiens (Human).